We begin with the raw amino-acid sequence, 622 residues long: Chaperone protein HscA homolog (622 aa).

The protein belongs to the heat shock protein 70 family.

Functionally, chaperone involved in the maturation of iron-sulfur cluster-containing proteins. Has a low intrinsic ATPase activity which is markedly stimulated by HscB. This is Chaperone protein HscA homolog from Acidovorax sp. (strain JS42).